Here is an 82-residue protein sequence, read N- to C-terminus: Putative membrane protein insertion efficiency factor (82 aa).

The disordered stretch occupies residues 63-82 (GGFDPVPLKKDKNSKTTHHH).

The protein belongs to the UPF0161 family.

Its subcellular location is the cell membrane. In terms of biological role, could be involved in insertion of integral membrane proteins into the membrane. The polypeptide is Putative membrane protein insertion efficiency factor (Staphylococcus epidermidis (strain ATCC 35984 / DSM 28319 / BCRC 17069 / CCUG 31568 / BM 3577 / RP62A)).